A 146-amino-acid polypeptide reads, in one-letter code: 3-hydroxyacyl-[acyl-carrier-protein] dehydratase FabZ (146 aa).

His-48 is an active-site residue.

Belongs to the thioester dehydratase family. FabZ subfamily.

It is found in the cytoplasm. The enzyme catalyses a (3R)-hydroxyacyl-[ACP] = a (2E)-enoyl-[ACP] + H2O. Functionally, involved in unsaturated fatty acids biosynthesis. Catalyzes the dehydration of short chain beta-hydroxyacyl-ACPs and long chain saturated and unsaturated beta-hydroxyacyl-ACPs. The polypeptide is 3-hydroxyacyl-[acyl-carrier-protein] dehydratase FabZ (Paracidovorax citrulli (strain AAC00-1) (Acidovorax citrulli)).